The chain runs to 265 residues: Cell adhesion molecule CEACAM10 (265 aa).

Positions 1–33 (MELASAHLHKGQVPWVGLLLTASLLTYWSPATT) are cleaved as a signal peptide. Ig-like V-type domains follow at residues 35 to 142 (QVTV…HVHP) and 155 to 262 (QVTV…NVHA). Residues Asn-44, Asn-87, and Asn-224 are each glycosylated (N-linked (GlcNAc...) asparagine).

The protein belongs to the immunoglobulin superfamily. CEA family. As to expression, abundant in seminal vesicle and traces in epididymis and prostate (at protein level). Highly expressed in seminal vesicle, minor in colon and placenta and, to a lesser extent, in small intestine, caecum, stomach, salivary gland and bone marrow.

The protein resides in the secreted. The protein localises to the extracellular space. In terms of biological role, may interact with other CEACAM proteins on the sperm surface. The polypeptide is Cell adhesion molecule CEACAM10 (Mus musculus (Mouse)).